A 105-amino-acid chain; its full sequence is Large ribosomal subunit protein uL24 (105 aa).

This sequence belongs to the universal ribosomal protein uL24 family. In terms of assembly, part of the 50S ribosomal subunit.

Its function is as follows. One of two assembly initiator proteins, it binds directly to the 5'-end of the 23S rRNA, where it nucleates assembly of the 50S subunit. One of the proteins that surrounds the polypeptide exit tunnel on the outside of the subunit. The polypeptide is Large ribosomal subunit protein uL24 (Vibrio parahaemolyticus serotype O3:K6 (strain RIMD 2210633)).